Reading from the N-terminus, the 136-residue chain is ATP synthase epsilon chain (136 aa).

It belongs to the ATPase epsilon chain family. In terms of assembly, F-type ATPases have 2 components, CF(1) - the catalytic core - and CF(0) - the membrane proton channel. CF(1) has five subunits: alpha(3), beta(3), gamma(1), delta(1), epsilon(1). CF(0) has three main subunits: a, b and c.

The protein localises to the cell inner membrane. Its function is as follows. Produces ATP from ADP in the presence of a proton gradient across the membrane. The protein is ATP synthase epsilon chain of Myxococcus xanthus (strain DK1622).